Reading from the N-terminus, the 504-residue chain is Phosphoenolpyruvate carboxylase (504 aa).

Polar residues predominate over residues 1-16; sequence MTSRKIPSIMGTQHPD. The tract at residues 1–21 is disordered; the sequence is MTSRKIPSIMGTQHPDNANAP.

Belongs to the PEPCase type 2 family. Homotetramer. Requires Mg(2+) as cofactor.

The catalysed reaction is oxaloacetate + phosphate = phosphoenolpyruvate + hydrogencarbonate. Catalyzes the irreversible beta-carboxylation of phosphoenolpyruvate (PEP) to form oxaloacetate (OAA), a four-carbon dicarboxylic acid source for the tricarboxylic acid cycle. The sequence is that of Phosphoenolpyruvate carboxylase from Leuconostoc mesenteroides subsp. mesenteroides (strain ATCC 8293 / DSM 20343 / BCRC 11652 / CCM 1803 / JCM 6124 / NCDO 523 / NBRC 100496 / NCIMB 8023 / NCTC 12954 / NRRL B-1118 / 37Y).